The chain runs to 355 residues: MAIDENKQKALAAALGQIEKQFGKGSIMRLGEDRSMDVETISTGSLSLDIALGAGGLPMGRIVEIYGPESSGKTTLTLQVIAAAQREGKTCAFIDAEHALDPIYAKKLGVDIDNLLCSQPDTGEQALEICDALTRSGAVDVIIVDSVAALTPKAEIEGEIGDSHMGLAARMMSQAMRKLAGNLKSSNTLLIFINQIRMKIGVMFGNPETTTGGNALKFYASVRLDIRRIGSVKNGEEVVGSETRVKVVKNKVAAPFKQAEFQIMYGEGINTYGELIDLGVKHKLVEKAGAWYSYNGDKIGQGKANATIYLKEHPEVATELDKKLREMLLHNAGEFNSAASDYEDNENEEMNNEEF.

Residue 67-74 (GPESSGKT) coordinates ATP. Residues 336–355 (NSAASDYEDNENEEMNNEEF) form a disordered region. Residues 341-355 (DYEDNENEEMNNEEF) are compositionally biased toward acidic residues.

It belongs to the RecA family.

The protein resides in the cytoplasm. Can catalyze the hydrolysis of ATP in the presence of single-stranded DNA, the ATP-dependent uptake of single-stranded DNA by duplex DNA, and the ATP-dependent hybridization of homologous single-stranded DNAs. It interacts with LexA causing its activation and leading to its autocatalytic cleavage. This chain is Protein RecA, found in Photorhabdus laumondii subsp. laumondii (strain DSM 15139 / CIP 105565 / TT01) (Photorhabdus luminescens subsp. laumondii).